We begin with the raw amino-acid sequence, 1526 residues long: Probable autotransporter YpjA (1526 aa).

A signal peptide spans 1 to 29 (MNRTSPYYCRRSVLSLLISALIYAPPGMA). Positions 1173-1223 (NSNWNLTNDVKPNPDPIPNPKPDPKPDPKPDPNPKPDPTPDPTPTPVPEKR) are disordered. Over residues 1194–1206 (PDPKPDPKPDPNP) the composition is skewed to basic and acidic residues. Pro residues predominate over residues 1207 to 1219 (KPDPTPDPTPTPV). Residues 1258-1526 (ASPHNNNVWG…NAVAGVNWSF (269 aa)) form the Autotransporter domain.

Its subcellular location is the cell outer membrane. Upon overexpression shows increased adherence to polyvinyl chloride (PVC) plates, increased mature biofilm formation. The sequence is that of Probable autotransporter YpjA (ypjA) from Escherichia coli (strain K12).